The following is a 420-amino-acid chain: Protein disulfide isomerase CRELD1 (420 aa).

The first 29 residues, 1 to 29 (MAPRSSRGIAPAMLCGLSLFLGFPGLVWV), serve as a signal peptide directing secretion. Residues 30–362 (QISVPPQSSP…GFFSEMTEDE (333 aa)) are Extracellular-facing. Residues 46-49 (CHTC) carry the CXXC motif. Disulfide bonds link C46–C49, C155–C169, C163–C181, and C183–C192. The region spanning 153 to 193 (LPCPGGAERPCGGYGHCEGEGTRGGSGHCDCQAGYGGEACG) is the EGF-like 1 domain. N205 is a glycosylation site (N-linked (GlcNAc...) asparagine). 2 FU repeats span residues 208 to 255 (HLVC…ERAS) and 268 to 315 (SYEC…AVCP). The CXXC motif lies at 278–281 (CLGC). 4 disulfide bridges follow: C278-C281, C309-C321, C314-C330, and C332-C343. Residues 305–344 (DVDECETAVCPGENQQCENTEGSYRCICADGYKQMEGICV) enclose the EGF-like 2; calcium-binding domain. The helical transmembrane segment at 363 to 383 (LVVLQQMFFGVIICALATLAA) threads the bilayer. Position 384 (K384) is a topological domain, cytoplasmic. A helical membrane pass occupies residues 385–405 (GDLVFTAIFIGAVAAMTGYWL). Topologically, residues 406–420 (SERSDRVLEGFIKGR) are extracellular.

It belongs to the CRELD family.

It is found in the membrane. It carries out the reaction Catalyzes the rearrangement of -S-S- bonds in proteins.. Its function is as follows. Protein disulfide isomerase. Promotes the localization of acetylcholine receptors (AChRs) to the plasma membrane. In Bos taurus (Bovine), this protein is Protein disulfide isomerase CRELD1 (CRELD1).